Consider the following 147-residue polypeptide: Large ribosomal subunit protein uL15 (147 aa).

Basic and acidic residues predominate over residues 1–11 (MKLHDLRPAKD). Residues 1-57 (MKLHDLRPAKDAKKKRKRVGRGTGSGRGFTSGRGSKGQNARSGGGVRPTFEGGQTPL) form a disordered region. The span at 21 to 35 (RGTGSGRGFTSGRGS) shows a compositional bias: gly residues.

Belongs to the universal ribosomal protein uL15 family. As to quaternary structure, part of the 50S ribosomal subunit.

Its function is as follows. Binds to the 23S rRNA. This chain is Large ribosomal subunit protein uL15, found in Halothermothrix orenii (strain H 168 / OCM 544 / DSM 9562).